The chain runs to 100 residues: Urease subunit gamma (100 aa).

The protein belongs to the urease gamma subunit family. Heterotrimer of UreA (gamma), UreB (beta) and UreC (alpha) subunits. Three heterotrimers associate to form the active enzyme.

Its subcellular location is the cytoplasm. It catalyses the reaction urea + 2 H2O + H(+) = hydrogencarbonate + 2 NH4(+). It participates in nitrogen metabolism; urea degradation; CO(2) and NH(3) from urea (urease route): step 1/1. The sequence is that of Urease subunit gamma from Ruegeria pomeroyi (strain ATCC 700808 / DSM 15171 / DSS-3) (Silicibacter pomeroyi).